Here is a 409-residue protein sequence, read N- to C-terminus: Elongation factor Tu (409 aa).

The 205-residue stretch at 10–214 (KPHVNIGTIG…AVDDNIPEPE (205 aa)) folds into the tr-type G domain. The G1 stretch occupies residues 19 to 26 (GHVDHGKT). 19 to 26 (GHVDHGKT) serves as a coordination point for GTP. T26 serves as a coordination point for Mg(2+). The interval 60–64 (GITIN) is G2. The tract at residues 81–84 (DCPG) is G3. GTP is bound by residues 81-85 (DCPGH) and 136-139 (NKKD). The tract at residues 136–139 (NKKD) is G4. The interval 174–176 (SAL) is G5.

It belongs to the TRAFAC class translation factor GTPase superfamily. Classic translation factor GTPase family. EF-Tu/EF-1A subfamily. In terms of assembly, monomer.

The protein localises to the cytoplasm. The enzyme catalyses GTP + H2O = GDP + phosphate + H(+). In terms of biological role, GTP hydrolase that promotes the GTP-dependent binding of aminoacyl-tRNA to the A-site of ribosomes during protein biosynthesis. The protein is Elongation factor Tu of Crocosphaera subtropica (strain ATCC 51142 / BH68) (Cyanothece sp. (strain ATCC 51142)).